The following is a 592-amino-acid chain: Inactive metallocarboxypeptidase ECM14 (592 aa).

Positions 1 to 21 (MRQFTHGTLLAILALANTISA) are cleaved as a signal peptide. The propeptide occupies 22–174 (IPSFSANNYP…QTVYESYPSS (153 aa)). Positions 170 to 179 (SYPSSSQRPT) are enriched in polar residues. Residues 170–191 (SYPSSSQRPTDNGRGFLPSRES) form a disordered region. The Peptidase M14 domain occupies 202–521 (DYQPLSVIGP…NAVMVLGKFL (320 aa)). Zn(2+) is bound by residues His-264 and Glu-267. Residues 264–267 (HARE), Arg-322, and 339–340 (DR) contribute to the substrate site. Cys-333 and Cys-356 are oxidised to a cystine. Asn-349 carries an N-linked (GlcNAc...) asparagine glycan. A Zn(2+)-binding site is contributed by His-396. 397 to 398 (SY) lines the substrate pocket. Residues 542 to 592 (ADKPILDDGDDDEEEDGQDKNDDSWIPDEYKNDNDHDDDDDGWGLRRRRKR) are disordered. Positions 548–558 (DDGDDDEEEDG) are enriched in acidic residues. The segment covering 559–575 (QDKNDDSWIPDEYKNDN) has biased composition (basic and acidic residues).

This sequence belongs to the peptidase M14 family. Zn(2+) is required as a cofactor.

It is found in the vacuole. The protein localises to the secreted. Functionally, inactive carboxypeptidase that may play a role in cell wall organization and biogenesis. The protein is Inactive metallocarboxypeptidase ECM14 (ECM14) of Blastomyces gilchristii (strain SLH14081) (Blastomyces dermatitidis).